The chain runs to 227 residues: UPF0173 metal-dependent hydrolase Tlet_1100 (227 aa).

Belongs to the UPF0173 family.

This chain is UPF0173 metal-dependent hydrolase Tlet_1100, found in Pseudothermotoga lettingae (strain ATCC BAA-301 / DSM 14385 / NBRC 107922 / TMO) (Thermotoga lettingae).